The sequence spans 306 residues: Pantothenate kinase (306 aa).

Residue 91–98 (GSVAVGKS) coordinates ATP.

Belongs to the prokaryotic pantothenate kinase family.

The protein localises to the cytoplasm. It catalyses the reaction (R)-pantothenate + ATP = (R)-4'-phosphopantothenate + ADP + H(+). The protein operates within cofactor biosynthesis; coenzyme A biosynthesis; CoA from (R)-pantothenate: step 1/5. This Streptococcus thermophilus (strain CNRZ 1066) protein is Pantothenate kinase.